A 384-amino-acid chain; its full sequence is Probable L-aspartate decarboxylase (384 aa).

N6-(pyridoxal phosphate)lysine is present on Lys233.

This sequence belongs to the group II decarboxylase family. MfnA subfamily. Requires pyridoxal 5'-phosphate as cofactor.

It catalyses the reaction L-aspartate + H(+) = beta-alanine + CO2. It participates in cofactor biosynthesis; coenzyme A biosynthesis. Functionally, catalyzes the decarboxylation of L-aspartate to produce beta-alanine. In Pyrococcus abyssi (strain GE5 / Orsay), this protein is Probable L-aspartate decarboxylase.